The following is a 125-amino-acid chain: Large ribosomal subunit protein mL51 (125 aa).

The transit peptide at Met1 to Leu29 directs the protein to the mitochondrion.

This sequence belongs to the mitochondrion-specific ribosomal protein mL51 family. Component of the mitochondrial ribosome large subunit (39S) which comprises a 16S rRNA and about 50 distinct proteins.

It is found in the mitochondrion. The polypeptide is Large ribosomal subunit protein mL51 (mrpl51) (Xenopus laevis (African clawed frog)).